A 100-amino-acid polypeptide reads, in one-letter code: Large ribosomal subunit protein uL23 (100 aa).

The protein belongs to the universal ribosomal protein uL23 family. As to quaternary structure, part of the 50S ribosomal subunit. Contacts protein L29, and trigger factor when it is bound to the ribosome.

Its function is as follows. One of the early assembly proteins it binds 23S rRNA. One of the proteins that surrounds the polypeptide exit tunnel on the outside of the ribosome. Forms the main docking site for trigger factor binding to the ribosome. This chain is Large ribosomal subunit protein uL23, found in Salmonella paratyphi A (strain ATCC 9150 / SARB42).